The chain runs to 1104 residues: DNA polymerase delta catalytic subunit (1104 aa).

Residues 1–60 are disordered; it reads MKRSIVTGGGNNDKKFKAQPPPKNNYRGGGDDEEDDEFEEDDDEDEGDEFGEEEDEDDID. The segment covering 31-60 has biased composition (acidic residues); sequence DDEEDDEFEEDDDEDEGDEFGEEEDEDDID. Zn(2+)-binding residues include cysteine 1012, cysteine 1015, cysteine 1027, and cysteine 1030. The CysA-type zinc-finger motif lies at 1012–1030; the sequence is CMNCPKELTDTESTTCINC. Positions 1059, 1062, 1072, and 1077 each coordinate [4Fe-4S] cluster. The CysB motif motif lies at 1059 to 1077; the sequence is CQRCSGSLHQPVLCSNRDC.

Belongs to the DNA polymerase type-B family. In terms of assembly, heterotetramer composed of subunits of 125 kDa, 50 kDa, 66 kDa and 12 kDa. The 125 kDa subunit contains the polymerase active site and most likely the active site for the 3'-5' exonuclease activity. [4Fe-4S] cluster is required as a cofactor.

The protein localises to the nucleus. It carries out the reaction DNA(n) + a 2'-deoxyribonucleoside 5'-triphosphate = DNA(n+1) + diphosphate. Possesses two enzymatic activities: DNA synthesis (polymerase) and an exonucleolytic activity that degrades single stranded DNA in the 3'- to 5'-direction. In Dictyostelium discoideum (Social amoeba), this protein is DNA polymerase delta catalytic subunit (pold1).